A 381-amino-acid polypeptide reads, in one-letter code: Glycerol-3-phosphate dehydrogenase [NAD(+)] (381 aa).

The segment at M1–P27 is disordered. NAD(+) contacts are provided by residues G34–G39, F66, and F122. Residue K145 participates in substrate binding. An NAD(+)-binding site is contributed by A178. K238 serves as the catalytic Proton acceptor. Positions 303 and 332 each coordinate NAD(+). Position 303 to 304 (R303 to N304) interacts with substrate.

Belongs to the NAD-dependent glycerol-3-phosphate dehydrogenase family.

It catalyses the reaction sn-glycerol 3-phosphate + NAD(+) = dihydroxyacetone phosphate + NADH + H(+). The protein is Glycerol-3-phosphate dehydrogenase [NAD(+)] (GPD) of Pichia angusta (Yeast).